Reading from the N-terminus, the 136-residue chain is Large ribosomal subunit protein uL16 (136 aa).

Belongs to the universal ribosomal protein uL16 family. In terms of assembly, part of the 50S ribosomal subunit.

Binds 23S rRNA and is also seen to make contacts with the A and possibly P site tRNAs. This chain is Large ribosomal subunit protein uL16, found in Buchnera aphidicola subsp. Baizongia pistaciae (strain Bp).